The chain runs to 423 residues: Cyclin-dependent kinase 14 (423 aa).

Residues 62-85 (VGKESPKVRRHSSPSSPTSPKFGK) are disordered. In terms of domain architecture, Protein kinase spans 89-373 (YEKLEKLGEG…AQAALNHDYF (285 aa)). Residues 95-103 (LGEGSYATV) and Lys118 each bind ATP. The active-site Proton acceptor is Asp210.

It belongs to the protein kinase superfamily. CMGC Ser/Thr protein kinase family. CDC2/CDKX subfamily. As to quaternary structure, interacts with ccny; ccny mediates its recruitment to the plasma membrane and promotes phosphorylation of lrp6.

The protein resides in the cell membrane. The catalysed reaction is L-seryl-[protein] + ATP = O-phospho-L-seryl-[protein] + ADP + H(+). The enzyme catalyses L-threonyl-[protein] + ATP = O-phospho-L-threonyl-[protein] + ADP + H(+). Functionally, serine/threonine-protein kinase involved in the control of the eukaryotic cell cycle, whose activity is controlled by an associated cyclin. Acts as a cell-cycle regulator of Wnt signaling pathway during G2/M phase by mediating the phosphorylation of lrp6, leading to the activation of the Wnt signaling pathway. This Xenopus tropicalis (Western clawed frog) protein is Cyclin-dependent kinase 14 (cdk14).